The sequence spans 1765 residues: Sodium channel protein type 11 subunit alpha (1765 aa).

The Cytoplasmic portion of the chain corresponds to 1–126 (MEERYYPVIF…PLRSLMIRIS (126 aa)). An I repeat occupies 115-403 (FNPLRSLMIR…VTMAYEEQNR (289 aa)). The chain crosses the membrane as a helical span at residues 127–148 (VHSVFSMFIICTVIINCMFMAN). The Extracellular segment spans residues 149–157 (SMERSFDND). A helical transmembrane segment spans residues 158–177 (IPEYVFIGIYILEAVIKILA). Residues 178–189 (RGFIVDEFSFLR) are Cytoplasmic-facing. A helical membrane pass occupies residues 190-209 (DPWNWLDFIVIGTAIATCFP). The Extracellular portion of the chain corresponds to 210-216 (GSQVNLS). Residue N214 is glycosylated (N-linked (GlcNAc...) asparagine). A helical; Voltage-sensor membrane pass occupies residues 217–236 (ALRTFRVFRALKAISVISGL). At 237 to 252 (KVIVGALLRSVKKLVD) the chain is on the cytoplasmic side. Residues 253–266 (VMVLTLFCLSIFAL) traverse the membrane as a helical segment. Residues 267–339 (VGQQLFMGIL…PDNNYTKFDN (73 aa)) are Extracellular-facing. A disulfide bridge connects residues C280 and C317. N-linked (GlcNAc...) asparagine glycans are attached at residues N319 and N333. The segment at residues 340–364 (FGWSFLAMFRVMTQDSWERLYRQIL) is an intramembrane region (pore-forming). The Extracellular portion of the chain corresponds to 365–371 (RTSGIYF). Residues 372–397 (VFFFVVVIFLGSFYLLNLTLAVVTMA) form a helical membrane-spanning segment. Topologically, residues 398-567 (YEEQNRNVAA…WLCIKKVLRT (170 aa)) are cytoplasmic. The stretch at 554–820 (CSPQWLCIKK…EGETRKTKVQ (267 aa)) is one II repeat. A helical transmembrane segment spans residues 568-591 (IMTDPFTELAITICIIINTVFLAV). Topologically, residues 592–602 (EHHNMDDNLKT) are extracellular. A helical membrane pass occupies residues 603–626 (ILKIGNWVFTGIFIAEMCLKIIAL). At 627-634 (DPYHYFRH) the chain is on the cytoplasmic side. Residues 635–656 (GWNVFDSIVALLSLADVLYNTL) traverse the membrane as a helical segment. At 657-662 (SDNNRS) the chain is on the extracellular side. N-linked (GlcNAc...) asparagine glycosylation occurs at N660. The helical; Voltage-sensor transmembrane segment at 663–682 (FLASLRVLRVFKLAKSWPTL) threads the bilayer. The Cytoplasmic segment spans residues 683–697 (NTLIKIIGHSVGALG). A helical membrane pass occupies residues 698–720 (NLTVVLTIVVFIFSVVGMRLFGT). Topologically, residues 721–741 (KFNKTAYATQERPRRRWHMDN) are extracellular. A glycan (N-linked (GlcNAc...) asparagine) is linked at N723. An intramembrane region (pore-forming) is located at residues 742–762 (FYHSFLVVFRILCGEWIENMW). Over 763-772 (GCMQDMDGSP) the chain is Extracellular. An intrachain disulfide couples C764 to C774. The helical transmembrane segment at 773 to 798 (LCIIVFVLIMVIGKLVVLNLFIALLL) threads the bilayer. Residues 799–1029 (NSFSNEEKDG…WWNIRKTCYQ (231 aa)) are Cytoplasmic-facing. One copy of the III repeat lies at 1022-1319 (NIRKTCYQIV…KKYYNAMKKL (298 aa)). A helical transmembrane segment spans residues 1030-1052 (IVKHSWFESFIIFVILLSSGALI). Over 1053–1066 (FEDVNLPSRPQVEK) the chain is Extracellular. A helical transmembrane segment spans residues 1067–1092 (LLRCTDNIFTFIFLLEMILKWVAFGF). The Cytoplasmic portion of the chain corresponds to 1093 to 1098 (RRYFTS). Residues 1099–1116 (AWCWLDFLIVVVSVLSLM) traverse the membrane as a helical segment. N1117 is a topological domain (extracellular). A helical; Voltage-sensor transmembrane segment spans residues 1118 to 1139 (LPSLKSFRTLRALRPLRALSQF). The Cytoplasmic segment spans residues 1140–1158 (EGMKVVVYALISAIPAILN). The chain crosses the membrane as a helical span at residues 1159 to 1180 (VLLVCLIFWLVFCILGVNLFSG). The Extracellular portion of the chain corresponds to 1181-1223 (KFGRCINGTDINMYLDFTEVPNRSQCNISNYSWKVPQVNFDNV). Residues N1187, N1202, N1207, and N1210 are each glycosylated (N-linked (GlcNAc...) asparagine). An intramembrane region (pore-forming) is located at residues 1224-1245 (GNAYLALLQVATYKGWLEIMNA). The Extracellular segment spans residues 1246 to 1261 (AVDSREKDEQPDFEAN). A helical transmembrane segment spans residues 1262 to 1288 (LYAYLYFVVFIIFGSFFTLNLFIGVII). Residues 1289-1341 (DNFNQQQKKLGGQDIFMTEEQKKYYNAMKKLGTKKPQKPIPRPLNKCQAFVFD) lie on the Cytoplasmic side of the membrane. One copy of the IV repeat lies at 1328–1619 (IPRPLNKCQA…WEKFDPEASQ (292 aa)). A helical transmembrane segment spans residues 1342-1365 (LVTSQVFDVIILGLIVLNMIIMMA). Over 1366–1376 (ESADQPKDVKK) the chain is Extracellular. The chain crosses the membrane as a helical span at residues 1377-1400 (TFDILNIAFVVIFTIECLIKVFAL). At 1401 to 1406 (RQHYFT) the chain is on the cytoplasmic side. A helical transmembrane segment spans residues 1407–1430 (NGWNLFDCVVVVLSIISTLVSRLE). The Extracellular segment spans residues 1431–1440 (DSDISFPPTL). Residues 1441-1463 (FRVVRLARIGRILRLVRAARGIR) traverse the membrane as a helical; Voltage-sensor segment. The Cytoplasmic portion of the chain corresponds to 1464-1478 (TLLFALMMSLPSLFN). A helical transmembrane segment spans residues 1479-1501 (IGLLLFLVMFIYAIFGMSWFSKV). Topologically, residues 1502–1515 (KKGSGIDDIFNFET) are extracellular. An intramembrane region (pore-forming) is located at residues 1516 to 1538 (FTGSMLCLFQITTSAGWDTLLNP). Residues 1539 to 1559 (MLEAKEHCNSSSQDSCQQPQI) lie on the Extracellular side of the membrane. A glycan (N-linked (GlcNAc...) asparagine) is linked at N1547. The helical transmembrane segment at 1560–1584 (AVVYFVSYIIISFLIVVNMYIAVIL) threads the bilayer. Residues 1585–1765 (ENFNTATEES…DVAKVKVHND (181 aa)) are Cytoplasmic-facing.

This sequence belongs to the sodium channel (TC 1.A.1.10) family. Nav1.9/SCN11A subfamily. As to quaternary structure, the voltage-resistant sodium channel consists of an ion conducting pore forming alpha-subunit regulated by one or more auxiliary subunits SCN1B, SCN2B and SCN3B. Expressed (at protein level) in myenteric sensory neurons. Expressed in small sensory neurons of the dorsal root ganglia (C-fiber neurons) and trigeminal ganglia.

Its subcellular location is the cell membrane. It catalyses the reaction Na(+)(in) = Na(+)(out). Its activity is regulated as follows. Activity is not sensitive to inhibition by tetrodotoxin. Its function is as follows. Sodium channel mediating the voltage-dependent sodium ion permeability of excitable membranes. Assuming opened or closed conformations in response to the voltage difference across the membrane, the protein forms a sodium-selective channel through which sodium ions may pass in accordance with their electrochemical gradient. Involved in membrane depolarization during action potential in nociceptors which function as key relay stations for the electrical transmission of pain signals from the periphery to the central nervous system. Also involved in rapid BDNF-evoked neuronal depolarization. The protein is Sodium channel protein type 11 subunit alpha of Rattus norvegicus (Rat).